The following is a 347-amino-acid chain: Protein RecA (347 aa).

Position 67 to 74 (67 to 74 (GPESSGKT)) interacts with ATP.

This sequence belongs to the RecA family.

Its subcellular location is the cytoplasm. In terms of biological role, can catalyze the hydrolysis of ATP in the presence of single-stranded DNA, the ATP-dependent uptake of single-stranded DNA by duplex DNA, and the ATP-dependent hybridization of homologous single-stranded DNAs. It interacts with LexA causing its activation and leading to its autocatalytic cleavage. The polypeptide is Protein RecA (Helicobacter pylori (strain G27)).